Here is a 139-residue protein sequence, read N- to C-terminus: D-ribose pyranase (139 aa).

Histidine 20 (proton donor) is an active-site residue. Substrate is bound by residues aspartate 28, histidine 106, and tyrosine 128–asparagine 130.

Belongs to the RbsD / FucU family. RbsD subfamily. Homodecamer.

It localises to the cytoplasm. The catalysed reaction is beta-D-ribopyranose = beta-D-ribofuranose. It participates in carbohydrate metabolism; D-ribose degradation; D-ribose 5-phosphate from beta-D-ribopyranose: step 1/2. Functionally, catalyzes the interconversion of beta-pyran and beta-furan forms of D-ribose. The protein is D-ribose pyranase of Salmonella arizonae (strain ATCC BAA-731 / CDC346-86 / RSK2980).